The sequence spans 337 residues: Molybdate import system permease protein MolB (337 aa).

Residues 1–5 (MQPDS) are Cytoplasmic-facing. The chain crosses the membrane as a helical span at residues 6-25 (YPKILFGLTLLLVITAVISL). Residues 26–51 (GIGRYSLSVPQIGQILWAKATALEID) lie on the Periplasmic side of the membrane. A helical transmembrane segment spans residues 52 to 87 (PVQQQVIFQVRLPRILTALCVGAGLALSGVVLQGIF). At 88-98 (RNPLVNPHIIG) the chain is on the cytoplasmic side. A helical membrane pass occupies residues 99 to 113 (VTSGSAFGGTLAIFF). The Periplasmic segment spans residues 114–116 (GFS). Residues 117 to 140 (LYGLFTSTILFGFGTLALVFLFSF) form a helical membrane-spanning segment. The Cytoplasmic segment spans residues 141–146 (KFNQRS). Residues 147 to 171 (LLMLILIGMILSGLFSALVSLLQYI) form a helical membrane-spanning segment. Over 172–193 (SDTEEKLPSIVFWLMGSFATSN) the chain is Periplasmic. Residues 194 to 214 (WEKLLFFFVPFLLCSSILLSL) traverse the membrane as a helical segment. Over 215 to 234 (SWRLNLLSLDEKEAKALGVK) the chain is Cytoplasmic. Residues 235 to 257 (MAPLRWLVIFLSGSLVACQVAIS) traverse the membrane as a helical segment. At 258 to 264 (GSIGWVG) the chain is on the periplasmic side. A helical membrane pass occupies residues 265-275 (LIIPHLSRMLV). Residues 276–278 (GAN) are Cytoplasmic-facing. A helical membrane pass occupies residues 279 to 304 (HQSLLPCTMLVGATYMLLVDNVARSL). The Periplasmic segment spans residues 305–310 (SDAEIP). The helical transmembrane segment at 311–329 (ISILTALIGAPLFGVLVYK) threads the bilayer. The Cytoplasmic segment spans residues 330-337 (LKRGGMNE).

This sequence belongs to the binding-protein-dependent transport system permease family. FecCD subfamily. In terms of assembly, the complex is composed of two ATP-binding proteins (MolC), two transmembrane proteins (MolB) and a solute-binding protein (MolA).

The protein resides in the cell inner membrane. Its activity is regulated as follows. The MolBCA complex shows a decrease in affinity in the presence of increasing concentrations of substrate and nucleotide. Functionally, part of the ABC transporter complex MolBCA involved in molybdate import. Responsible for the translocation of the substrate across the membrane. Functions as a low-affinity molybdate transporter. The chain is Molybdate import system permease protein MolB from Haemophilus influenzae (strain ATCC 51907 / DSM 11121 / KW20 / Rd).